A 151-amino-acid polypeptide reads, in one-letter code: Ribosome maturation factor RimP (151 aa).

It belongs to the RimP family.

Its subcellular location is the cytoplasm. Required for maturation of 30S ribosomal subunits. The sequence is that of Ribosome maturation factor RimP from Aliivibrio salmonicida (strain LFI1238) (Vibrio salmonicida (strain LFI1238)).